A 359-amino-acid polypeptide reads, in one-letter code: Phospho-N-acetylmuramoyl-pentapeptide-transferase (359 aa).

The next 10 membrane-spanning stretches (helical) occupy residues 3 to 23, 55 to 75, 84 to 104, 117 to 137, 156 to 176, 187 to 207, 231 to 251, 255 to 275, 280 to 300, and 334 to 354; these read QIII…PVLI, VAIL…GIAF, GLLV…DDFI, TSKT…VLQF, IATV…LVMS, LDGL…IVTF, LAVI…WNAA, IFMG…LSVT, LLAV…VLQI, and FWLL…GEWL.

Belongs to the glycosyltransferase 4 family. MraY subfamily. Mg(2+) serves as cofactor.

The protein resides in the cell membrane. It carries out the reaction UDP-N-acetyl-alpha-D-muramoyl-L-alanyl-gamma-D-glutamyl-meso-2,6-diaminopimeloyl-D-alanyl-D-alanine + di-trans,octa-cis-undecaprenyl phosphate = di-trans,octa-cis-undecaprenyl diphospho-N-acetyl-alpha-D-muramoyl-L-alanyl-D-glutamyl-meso-2,6-diaminopimeloyl-D-alanyl-D-alanine + UMP. It participates in cell wall biogenesis; peptidoglycan biosynthesis. Its function is as follows. Catalyzes the initial step of the lipid cycle reactions in the biosynthesis of the cell wall peptidoglycan: transfers peptidoglycan precursor phospho-MurNAc-pentapeptide from UDP-MurNAc-pentapeptide onto the lipid carrier undecaprenyl phosphate, yielding undecaprenyl-pyrophosphoryl-MurNAc-pentapeptide, known as lipid I. The protein is Phospho-N-acetylmuramoyl-pentapeptide-transferase of Mycobacteroides abscessus (strain ATCC 19977 / DSM 44196 / CCUG 20993 / CIP 104536 / JCM 13569 / NCTC 13031 / TMC 1543 / L948) (Mycobacterium abscessus).